We begin with the raw amino-acid sequence, 113 residues long: Hydrogenase maturation factor HybF (113 aa).

Ni(2+) contacts are provided by His2 and Glu3. 4 residues coordinate Zn(2+): Cys73, Cys76, Cys89, and Cys92.

Belongs to the HypA/HybF family. HybF subfamily.

Its function is as follows. Involved in the maturation of [NiFe] hydrogenases. Required for nickel insertion into the metal center of the hydrogenase. The chain is Hydrogenase maturation factor HybF from Morganella morganii (Proteus morganii).